The chain runs to 156 residues: Small ribosomal subunit protein uS7 (156 aa).

It belongs to the universal ribosomal protein uS7 family. Part of the 30S ribosomal subunit. Contacts proteins S9 and S11.

Its function is as follows. One of the primary rRNA binding proteins, it binds directly to 16S rRNA where it nucleates assembly of the head domain of the 30S subunit. Is located at the subunit interface close to the decoding center, probably blocks exit of the E-site tRNA. In Shewanella loihica (strain ATCC BAA-1088 / PV-4), this protein is Small ribosomal subunit protein uS7.